We begin with the raw amino-acid sequence, 91 residues long: Co-chaperonin GroES (91 aa).

This sequence belongs to the GroES chaperonin family. In terms of assembly, heptamer of 7 subunits arranged in a ring. Interacts with the chaperonin GroEL.

The protein resides in the cytoplasm. Functionally, together with the chaperonin GroEL, plays an essential role in assisting protein folding. The GroEL-GroES system forms a nano-cage that allows encapsulation of the non-native substrate proteins and provides a physical environment optimized to promote and accelerate protein folding. GroES binds to the apical surface of the GroEL ring, thereby capping the opening of the GroEL channel. This is Co-chaperonin GroES from Oenococcus oeni (strain ATCC BAA-331 / PSU-1).